The following is a 252-amino-acid chain: Fructose-1,6-bisphosphatase/inositol-1-monophosphatase (252 aa).

Mg(2+) contacts are provided by glutamate 65, aspartate 81, isoleucine 83, and aspartate 84. Residues 84–86 (DGS), arginine 170, phenylalanine 175, and arginine 194 contribute to the substrate site. Residue aspartate 201 coordinates Mg(2+).

The protein belongs to the inositol monophosphatase superfamily. FBPase class 4 family. Homodimer. The cofactor is Mg(2+).

It catalyses the reaction beta-D-fructose 1,6-bisphosphate + H2O = beta-D-fructose 6-phosphate + phosphate. The catalysed reaction is a myo-inositol phosphate + H2O = myo-inositol + phosphate. IMPase activity is inhibited by Ca(2+) and Zn(2+). In contrast to mammalian I-1-P phosphatases, is not inhibited by Li(+) up to 100 mM. Functionally, phosphatase with broad specificity; it can dephosphorylate fructose 1,6-bisphosphate, both D and L isomers of inositol-1-phosphate (I-1-P), 2'-AMP, pNPP, beta-glycerol phosphate, and alpha-D-glucose-1-phosphate. Cannot hydrolyze glucose-6-phosphate, fructose-6-phosphate, NAD(+) or 5'-AMP. May be involved in the biosynthesis of a unique osmolyte, di-myo-inositol 1,1-phosphate. This Methanocaldococcus jannaschii (strain ATCC 43067 / DSM 2661 / JAL-1 / JCM 10045 / NBRC 100440) (Methanococcus jannaschii) protein is Fructose-1,6-bisphosphatase/inositol-1-monophosphatase (suhB).